The primary structure comprises 108 residues: MSTEASVSYAALILADAEQEITSEKLLAITKAAGANVDQVWADVFAKAVEGKNLKELLFSFAAAAPASGAAAGSASGAAAGGEAAAEEAAEEEAAEESDDDMGFGLFD.

Low complexity predominate over residues 72–84 (AGSASGAAAGGEA). The tract at residues 72-108 (AGSASGAAAGGEAAAEEAAEEEAAEESDDDMGFGLFD) is disordered. A compositionally biased stretch (acidic residues) spans 85–102 (AAEEAAEEEAAEESDDDM).

This sequence belongs to the eukaryotic ribosomal protein P1/P2 family. In terms of assembly, P1 and P2 exist as dimers at the large ribosomal subunit. Post-translationally, phosphorylated.

Plays an important role in the elongation step of protein synthesis. In Candida albicans (Yeast), this protein is Large ribosomal subunit protein P1B (RPP1B).